Reading from the N-terminus, the 749-residue chain is MFKRTIPLFAAFTLAISPSIFPNYAHAQEDKPKTNQYWWPKMLDLSPLRQPNATSNPMGEKFNYAEEFNSLDLNAVIEDLKKLMTTSQDWWPADYGNYGPLFIRMSWHAAGTYRIYDGRGGANGGFQRFAPQNSWPDNANLDKARRLLWPIKQKYGRKISWADLLVLAGNVAMESMGFKTIGFAGGREDAWEAININWGPEGKWLESKRQDKDGKLEKPLAATVMGLIYVNPEGPNGVPDPLAAAEKIRETFGRMAMNDEETVALIAGGHAFGKTHGAASGKYLGPAPEAAGIEEQGFGWKNSYGSGKGKDTITSGLEGAWTVTPTHWSHNYLQNLFNFNWVKTKSPGGAIQWVPENSNASSMVPDAFDPSKRHAPVMLTTDLALKFDPVYSKIAKRFLDNPKEFDDAFARAWFKLIHRDMGPRSRYLGSLVPKEAMIWQDPVPPVDYKLVDANDIANLKGKILNSGLTTSELVKTAWASASTFRGTDMRGGANGARIRLAPQKDWPANDPQELAKVLKTLESIQNNFNNAQADGKKISLADLIVLGGNAAIEQAAKQAGYDIIVPFTPGRTDATQGMTDVKSFEVLEPKADGFRNYFDKSNNMSPPEMLVEKASLLKLSVPEMTVLVGGMRVLNANTGQNQYGVFTDKPGTLNNDFFINLLSMSTEWKKSSETEGIYEGYERKTGKLKWKATSVDLIFGANSELRAVAEAYATDDAKEKFIQDFINAWVKVMTADRFDIKAANANINS.

Residues 1–27 form the signal peptide; the sequence is MFKRTIPLFAAFTLAISPSIFPNYAHA. The tryptophyl-tyrosyl-methioninium (Trp-Tyr) (with M-255) cross-link spans 107–229; sequence WHAAGTYRIY…LAATVMGLIY (123 aa). His-108 (proton acceptor) is an active-site residue. The tryptophyl-tyrosyl-methioninium (Tyr-Met) (with W-107) cross-link spans 229–255; the sequence is YVNPEGPNGVPDPLAAAEKIRETFGRM. Residue His-270 coordinates heme b.

Belongs to the peroxidase family. Peroxidase/catalase subfamily. Homodimer or homotetramer. Requires heme b as cofactor. Formation of the three residue Trp-Tyr-Met cross-link is important for the catalase, but not the peroxidase activity of the enzyme.

The enzyme catalyses H2O2 + AH2 = A + 2 H2O. It carries out the reaction 2 H2O2 = O2 + 2 H2O. Functionally, bifunctional enzyme with both catalase and broad-spectrum peroxidase activity. This Legionella pneumophila subsp. pneumophila (strain Philadelphia 1 / ATCC 33152 / DSM 7513) protein is Catalase-peroxidase 2.